An 89-amino-acid chain; its full sequence is MAHKKAGGSSRNGRDSESKRLGVKKFGGEAVIAGNIIVRQRGTQWHPGSNVGLGKDHTIFALTAGNVDYRTKANGRVYVSVMPKAEAAE.

A disordered region spans residues 1–22 (MAHKKAGGSSRNGRDSESKRLG).

Belongs to the bacterial ribosomal protein bL27 family.

The polypeptide is Large ribosomal subunit protein bL27 (Rhizobium etli (strain CIAT 652)).